We begin with the raw amino-acid sequence, 54 residues long: MAAKGARMIIHLECTECKNRNYTTEKNKKNDPDRLELRKYCKFCRKHTLHRETK.

Belongs to the bacterial ribosomal protein bL33 family.

The polypeptide is Large ribosomal subunit protein bL33 (Caldicellulosiruptor saccharolyticus (strain ATCC 43494 / DSM 8903 / Tp8T 6331)).